A 285-amino-acid polypeptide reads, in one-letter code: Lipoyl synthase (285 aa).

Positions 36, 41, 47, 62, 66, 69, and 275 each coordinate [4Fe-4S] cluster. Residues 48–264 enclose the Radical SAM core domain; it reads FSKKTATFLI…KEYAISIGFK (217 aa).

The protein belongs to the radical SAM superfamily. Lipoyl synthase family. Requires [4Fe-4S] cluster as cofactor.

The protein resides in the cytoplasm. The catalysed reaction is [[Fe-S] cluster scaffold protein carrying a second [4Fe-4S](2+) cluster] + N(6)-octanoyl-L-lysyl-[protein] + 2 oxidized [2Fe-2S]-[ferredoxin] + 2 S-adenosyl-L-methionine + 4 H(+) = [[Fe-S] cluster scaffold protein] + N(6)-[(R)-dihydrolipoyl]-L-lysyl-[protein] + 4 Fe(3+) + 2 hydrogen sulfide + 2 5'-deoxyadenosine + 2 L-methionine + 2 reduced [2Fe-2S]-[ferredoxin]. The protein operates within protein modification; protein lipoylation via endogenous pathway; protein N(6)-(lipoyl)lysine from octanoyl-[acyl-carrier-protein]: step 2/2. Its function is as follows. Catalyzes the radical-mediated insertion of two sulfur atoms into the C-6 and C-8 positions of the octanoyl moiety bound to the lipoyl domains of lipoate-dependent enzymes, thereby converting the octanoylated domains into lipoylated derivatives. The sequence is that of Lipoyl synthase from Caldicellulosiruptor saccharolyticus (strain ATCC 43494 / DSM 8903 / Tp8T 6331).